Reading from the N-terminus, the 346-residue chain is 3-keto-steroid reductase ERG27 (346 aa).

3 residues coordinate NADP(+): L19, T42, and K48. Active-site proton donor residues include S182 and Y205. 3 residues coordinate NADP(+): Y205, K209, and S241. The active-site Lowers pKa of active site Tyr is the K209. Residues 242 to 262 (FSFFQYLNVFTYYGMLFLFYL) form a helical membrane-spanning segment. The N-linked (GlcNAc...) asparagine glycan is linked to N272.

This sequence belongs to the short-chain dehydrogenases/reductases (SDR) family. ERG27 subfamily. As to quaternary structure, heterotetramer of ERG25, ERG26, ERG27 and ERG28. ERG28 acts as a scaffold to tether ERG27 and other 4,4-demethylation-related enzymes, forming a demethylation enzyme complex, in the endoplasmic reticulum. Interacts with ERG25 and ERG28. Also interacts with ERG7, but only in lipid particles.

The protein localises to the endoplasmic reticulum membrane. It is found in the lipid droplet. The catalysed reaction is 3-dehydro-4alpha-methylzymosterol + NADPH + H(+) = 4alpha-methylzymosterol + NADP(+). The protein operates within steroid biosynthesis; zymosterol biosynthesis; zymosterol from lanosterol: step 5/6. Functionally, 3-keto-steroid reductase; part of the third module of ergosterol biosynthesis pathway that includes the late steps of the pathway. ERG27 is a catalytic component of the C-4 demethylation complex that catalyzes the reduction of the keto group on the C-3. The third module or late pathway involves the ergosterol synthesis itself through consecutive reactions that mainly occur in the endoplasmic reticulum (ER) membrane. Firstly, the squalene synthase ERG9 catalyzes the condensation of 2 farnesyl pyrophosphate moieties to form squalene, which is the precursor of all steroids. Squalene synthase is crucial for balancing the incorporation of farnesyl diphosphate (FPP) into sterol and nonsterol isoprene synthesis. Secondly, the squalene epoxidase ERG1 catalyzes the stereospecific oxidation of squalene to (S)-2,3-epoxysqualene, which is considered to be a rate-limiting enzyme in steroid biosynthesis. Then, the lanosterol synthase ERG7 catalyzes the cyclization of (S)-2,3 oxidosqualene to lanosterol, a reaction that forms the sterol core. In the next steps, lanosterol is transformed to zymosterol through a complex process involving various demethylation, reduction and desaturation reactions. The lanosterol 14-alpha-demethylase ERG11 (also known as CYP51) catalyzes C14-demethylation of lanosterol to produce 4,4'-dimethyl cholesta-8,14,24-triene-3-beta-ol, which is critical for ergosterol biosynthesis. The C-14 reductase ERG24 reduces the C14=C15 double bond of 4,4-dimethyl-cholesta-8,14,24-trienol to produce 4,4-dimethyl-cholesta-8,24-dienol. 4,4-dimethyl-cholesta-8,24-dienol is substrate of the C-4 demethylation complex ERG25-ERG26-ERG27 in which ERG25 catalyzes the three-step monooxygenation required for the demethylation of 4,4-dimethyl and 4alpha-methylsterols, ERG26 catalyzes the oxidative decarboxylation that results in a reduction of the 3-beta-hydroxy group at the C-3 carbon to an oxo group, and ERG27 is responsible for the reduction of the keto group on the C-3. ERG28 has a role as a scaffold to help anchor ERG25, ERG26 and ERG27 to the endoplasmic reticulum and ERG29 regulates the activity of the iron-containing C4-methylsterol oxidase ERG25. Then, the sterol 24-C-methyltransferase ERG6 catalyzes the methyl transfer from S-adenosyl-methionine to the C-24 of zymosterol to form fecosterol. The C-8 sterol isomerase ERG2 catalyzes the reaction which results in unsaturation at C-7 in the B ring of sterols and thus converts fecosterol to episterol. The sterol-C5-desaturase ERG3 then catalyzes the introduction of a C-5 double bond in the B ring to produce 5-dehydroepisterol. The C-22 sterol desaturase ERG5 further converts 5-dehydroepisterol into ergosta-5,7,22,24(28)-tetraen-3beta-ol by forming the C-22(23) double bond in the sterol side chain. Finally, ergosta-5,7,22,24(28)-tetraen-3beta-ol is substrate of the C-24(28) sterol reductase ERG4 to produce ergosterol. In terms of biological role, facilitates the association of ERG7 with lipid particles preventing its digestion in the endoplasmic reticulum and the lipid particles. In Candida albicans (strain SC5314 / ATCC MYA-2876) (Yeast), this protein is 3-keto-steroid reductase ERG27.